Reading from the N-terminus, the 75-residue chain is Small ribosomal subunit protein bS21A (75 aa).

Belongs to the bacterial ribosomal protein bS21 family.

The chain is Small ribosomal subunit protein bS21A (rpsU1) from Agrobacterium fabrum (strain C58 / ATCC 33970) (Agrobacterium tumefaciens (strain C58)).